The following is a 474-amino-acid chain: Proline--tRNA ligase (474 aa).

It belongs to the class-II aminoacyl-tRNA synthetase family. ProS type 3 subfamily. In terms of assembly, homodimer.

It is found in the cytoplasm. The catalysed reaction is tRNA(Pro) + L-proline + ATP = L-prolyl-tRNA(Pro) + AMP + diphosphate. Catalyzes the attachment of proline to tRNA(Pro) in a two-step reaction: proline is first activated by ATP to form Pro-AMP and then transferred to the acceptor end of tRNA(Pro). In Mycoplasma capricolum subsp. capricolum (strain California kid / ATCC 27343 / NCTC 10154), this protein is Proline--tRNA ligase.